The following is a 75-amino-acid chain: uncharacterized protein (75 aa).

This is an uncharacterized protein from Dryophytes versicolor (chameleon treefrog).